Reading from the N-terminus, the 117-residue chain is Large ribosomal subunit protein uL22 (117 aa).

It belongs to the universal ribosomal protein uL22 family. As to quaternary structure, part of the 50S ribosomal subunit.

This protein binds specifically to 23S rRNA; its binding is stimulated by other ribosomal proteins, e.g. L4, L17, and L20. It is important during the early stages of 50S assembly. It makes multiple contacts with different domains of the 23S rRNA in the assembled 50S subunit and ribosome. Its function is as follows. The globular domain of the protein is located near the polypeptide exit tunnel on the outside of the subunit, while an extended beta-hairpin is found that lines the wall of the exit tunnel in the center of the 70S ribosome. The protein is Large ribosomal subunit protein uL22 of Leptospira biflexa serovar Patoc (strain Patoc 1 / ATCC 23582 / Paris).